We begin with the raw amino-acid sequence, 218 residues long: Ribose-5-phosphate isomerase A (218 aa).

Substrate contacts are provided by residues 28–31, 81–84, and 94–97; these read TGST, DGAD, and KGGG. The Proton acceptor role is filled by Glu103. Position 121 (Lys121) interacts with substrate.

This sequence belongs to the ribose 5-phosphate isomerase family. In terms of assembly, homodimer.

It carries out the reaction aldehydo-D-ribose 5-phosphate = D-ribulose 5-phosphate. The protein operates within carbohydrate degradation; pentose phosphate pathway; D-ribose 5-phosphate from D-ribulose 5-phosphate (non-oxidative stage): step 1/1. Its function is as follows. Catalyzes the reversible conversion of ribose-5-phosphate to ribulose 5-phosphate. The protein is Ribose-5-phosphate isomerase A of Vibrio atlanticus (strain LGP32) (Vibrio splendidus (strain Mel32)).